The following is a 229-amino-acid chain: Putative N-acetylmannosamine-6-phosphate 2-epimerase 2 (229 aa).

Belongs to the NanE family.

The catalysed reaction is an N-acyl-D-glucosamine 6-phosphate = an N-acyl-D-mannosamine 6-phosphate. Its pathway is amino-sugar metabolism; N-acetylneuraminate degradation; D-fructose 6-phosphate from N-acetylneuraminate: step 3/5. In terms of biological role, converts N-acetylmannosamine-6-phosphate (ManNAc-6-P) to N-acetylglucosamine-6-phosphate (GlcNAc-6-P). The chain is Putative N-acetylmannosamine-6-phosphate 2-epimerase 2 (nanE2) from Salmonella typhimurium (strain LT2 / SGSC1412 / ATCC 700720).